The primary structure comprises 1171 residues: Phytochrome B (1171 aa).

Residues 1-19 (MASGSRATPTRSPSSARPA) are compositionally biased toward low complexity. The disordered stretch occupies residues 1–53 (MASGSRATPTRSPSSARPAAPRHQHHHSQSSGGSTSRAGGGGGGGGGGGGGAA). Gly residues predominate over residues 38-52 (AGGGGGGGGGGGGGA). The region spanning 259–442 (DVKLLCDTVV…AFGLQLNMEL (184 aa)) is the GAF domain. A phytochromobilin-binding site is contributed by cysteine 364. PAS domains are found at residues 661 to 732 (VARE…LRGD) and 795 to 866 (DYKA…MIVL). Residues 943–1161 (YIYQEIKNPL…FFHIVLELPQ (219 aa)) enclose the Histidine kinase domain.

The protein belongs to the phytochrome family. Homodimer. Post-translationally, contains one covalently linked phytochromobilin chromophore.

Functionally, regulatory photoreceptor which exists in two forms that are reversibly interconvertible by light: the Pr form that absorbs maximally in the red region of the spectrum and the Pfr form that absorbs maximally in the far-red region. Photoconversion of Pr to Pfr induces an array of morphogenic responses, whereas reconversion of Pfr to Pr cancels the induction of those responses. Pfr controls the expression of a number of nuclear genes including those encoding the small subunit of ribulose-bisphosphate carboxylase, chlorophyll A/B binding protein, protochlorophyllide reductase, rRNA, etc. It also controls the expression of its own gene(s) in a negative feedback fashion. The sequence is that of Phytochrome B (PHYB) from Oryza sativa subsp. indica (Rice).